A 140-amino-acid chain; its full sequence is UPF0102 protein ACIAD1132 (140 aa).

This sequence belongs to the UPF0102 family.

This is UPF0102 protein ACIAD1132 from Acinetobacter baylyi (strain ATCC 33305 / BD413 / ADP1).